The following is a 321-amino-acid chain: uncharacterized protein (321 aa).

Residues 1–80 (MQGGQEVGRE…GELSGGWGEF (80 aa)) are disordered.

This is an uncharacterized protein from Mus musculus (Mouse).